A 248-amino-acid polypeptide reads, in one-letter code: Ribosomal RNA small subunit methyltransferase G (248 aa).

S-adenosyl-L-methionine contacts are provided by residues Gly85, Phe90, 108-110, 137-138, and Arg156; these read DSS and AE.

This sequence belongs to the methyltransferase superfamily. RNA methyltransferase RsmG family.

It localises to the cytoplasm. Its function is as follows. Specifically methylates the N7 position of a guanine in 16S rRNA. In Prochlorococcus marinus (strain NATL1A), this protein is Ribosomal RNA small subunit methyltransferase G.